The chain runs to 139 residues: Transmembrane protein 250 (139 aa).

A run of 2 helical transmembrane segments spans residues 56–76 (FLLY…LAAL) and 116–136 (VYGI…FMVF).

In terms of assembly, (Microbial infection) Interacts with herpes simplex virus 1/HHV-1 protein CVC2/UL25.

The protein localises to the membrane. The protein resides in the nucleus. Its subcellular location is the cytoplasm. In terms of biological role, may play a role in cell proliferation by promoting progression into S phase. (Microbial infection) Promotes human herpes simplex virus 1/HHV-1 proliferation. The sequence is that of Transmembrane protein 250 from Homo sapiens (Human).